Here is an 874-residue protein sequence, read N- to C-terminus: Alanine--tRNA ligase (874 aa).

Zn(2+) is bound by residues H564, H568, C665, and H669.

It belongs to the class-II aminoacyl-tRNA synthetase family. Zn(2+) serves as cofactor.

Its subcellular location is the cytoplasm. The catalysed reaction is tRNA(Ala) + L-alanine + ATP = L-alanyl-tRNA(Ala) + AMP + diphosphate. Catalyzes the attachment of alanine to tRNA(Ala) in a two-step reaction: alanine is first activated by ATP to form Ala-AMP and then transferred to the acceptor end of tRNA(Ala). Also edits incorrectly charged Ser-tRNA(Ala) and Gly-tRNA(Ala) via its editing domain. This Acidovorax sp. (strain JS42) protein is Alanine--tRNA ligase.